A 137-amino-acid chain; its full sequence is Large ribosomal subunit protein uL16 (137 aa).

It belongs to the universal ribosomal protein uL16 family. As to quaternary structure, part of the 50S ribosomal subunit.

Binds 23S rRNA and is also seen to make contacts with the A and possibly P site tRNAs. This Azorhizobium caulinodans (strain ATCC 43989 / DSM 5975 / JCM 20966 / LMG 6465 / NBRC 14845 / NCIMB 13405 / ORS 571) protein is Large ribosomal subunit protein uL16.